Consider the following 379-residue polypeptide: Cytochrome b (379 aa).

A run of 4 helical transmembrane segments spans residues 34-54, 78-100, 113-133, and 179-199; these read YGSLLGITLVFQIMTGIMLAM, WMIRFFHGNGASFFFICLYVHIG, TWNIGIIILLLTMATAFLGYV, and FFSLHFLLPFIISAMVMIHLL. Residues His-84 and His-98 each coordinate heme b. Heme b contacts are provided by His-183 and His-197. His-202 serves as a coordination point for a ubiquinone. Helical transmembrane passes span 225 to 245, 289 to 309, 320 to 340, and 345 to 365; these read FSIKDLITMMLFIMILSFLVL, LGGVIALLMSIMILFFLPIFS, WSGMIFWSFINIIILLTWIGA, and APYIIFGQILSVLYFLTFFWM.

Belongs to the cytochrome b family. In terms of assembly, the main subunits of complex b-c1 are: cytochrome b, cytochrome c1 and the Rieske protein. Heme b serves as cofactor.

It localises to the mitochondrion inner membrane. In terms of biological role, component of the ubiquinol-cytochrome c reductase complex (complex III or cytochrome b-c1 complex) that is part of the mitochondrial respiratory chain. The b-c1 complex mediates electron transfer from ubiquinol to cytochrome c. Contributes to the generation of a proton gradient across the mitochondrial membrane that is then used for ATP synthesis. This Epiperipatus biolleyi (Velvet worm) protein is Cytochrome b (mt:Cyt-b).